Consider the following 254-residue polypeptide: Triosephosphate isomerase (254 aa).

Residue 12 to 14 (NWK) coordinates substrate. The active-site Electrophile is the His-99. The Proton acceptor role is filled by Glu-169. Substrate contacts are provided by residues Gly-175, Ser-214, and 235 to 236 (GG).

It belongs to the triosephosphate isomerase family. Homodimer.

The protein localises to the cytoplasm. It carries out the reaction D-glyceraldehyde 3-phosphate = dihydroxyacetone phosphate. Its pathway is carbohydrate biosynthesis; gluconeogenesis. It functions in the pathway carbohydrate degradation; glycolysis; D-glyceraldehyde 3-phosphate from glycerone phosphate: step 1/1. Its function is as follows. Involved in the gluconeogenesis. Catalyzes stereospecifically the conversion of dihydroxyacetone phosphate (DHAP) to D-glyceraldehyde-3-phosphate (G3P). In Bartonella henselae (strain ATCC 49882 / DSM 28221 / CCUG 30454 / Houston 1) (Rochalimaea henselae), this protein is Triosephosphate isomerase.